The chain runs to 616 residues: UvrABC system protein C (616 aa).

In terms of domain architecture, GIY-YIG spans 11–85 (ASPGVYIFRR…IKQHRPHYNV (75 aa)). Positions 194-229 (APVIARLKADMQAAARAQDFEQAARLRDRVQAVEKL) constitute a UVR domain.

It belongs to the UvrC family. As to quaternary structure, interacts with UvrB in an incision complex.

It localises to the cytoplasm. Its function is as follows. The UvrABC repair system catalyzes the recognition and processing of DNA lesions. UvrC both incises the 5' and 3' sides of the lesion. The N-terminal half is responsible for the 3' incision and the C-terminal half is responsible for the 5' incision. This Deinococcus geothermalis (strain DSM 11300 / CIP 105573 / AG-3a) protein is UvrABC system protein C.